The chain runs to 704 residues: Glycine--tRNA ligase beta subunit (704 aa).

This sequence belongs to the class-II aminoacyl-tRNA synthetase family. In terms of assembly, tetramer of two alpha and two beta subunits.

The protein resides in the cytoplasm. The catalysed reaction is tRNA(Gly) + glycine + ATP = glycyl-tRNA(Gly) + AMP + diphosphate. In Delftia acidovorans (strain DSM 14801 / SPH-1), this protein is Glycine--tRNA ligase beta subunit.